Reading from the N-terminus, the 266-residue chain is MKLSLSPPPYADAPVVVLISGLGGSGSYWLPQLAVLEQEYQVVCYDQRGTGNNPDTLAEDYSIAQMAAELHQVLVAAGIEHYAVVGHALGALVGMQLALDYPASVTVLVSVNGWLRINAHTRRCFQVRERLLYSGGAQAWVEAQPLFLYPADWMAARAPRLEAEDALALAHFQGKNNLLRRLNALKRADFSHHADRIRCPVQIICASDDLLVPSACSSELHAALPDSQKMVMRYGGHACNVTDPETFNALLLNGLASLLHHREAAL.

Residues 14–115 enclose the AB hydrolase-1 domain; the sequence is PVVVLISGLG…TVLVSVNGWL (102 aa).

Belongs to the AB hydrolase superfamily. Hydrolase RutD family.

The enzyme catalyses carbamate + 2 H(+) = NH4(+) + CO2. In terms of biological role, involved in pyrimidine catabolism. May facilitate the hydrolysis of carbamate, a reaction that can also occur spontaneously. This Escherichia coli O9:H4 (strain HS) protein is Putative carbamate hydrolase RutD.